The sequence spans 227 residues: Basic leucine zipper 24 (227 aa).

The tract at residues 44–68 (EDKDQDRVTRGCSHTHSCNPPGPED) is disordered. In terms of domain architecture, bZIP spans 94–160 (DSSNKKRLCG…IRLRALLVEM (67 aa)). The basic motif stretch occupies residues 98–118 (KKRLCGNREAVRKYREKKKAR). The leucine-zipper stretch occupies residues 122-129 (LEDEVMRL).

Homodimer. Expressed in young leaves and cauline leaves.

Its subcellular location is the nucleus. It localises to the cytoplasm. Transcription factor involved in the regulation of salt stress response. Functions as a negative transcriptional regulator of salt stress acclimation response by regulating cation homeostasis. Negatively regulates the expression of genes contributing to ion and osmotic homeostasis during salt stress, such as the Na(+) transporter HKT1, the Na(+)/H(+) antiporter SOS1, the aquaporin PIP2-1 and the glutamine synthetase GLN1-3. In addition, targets genes with functions in plant growth and development, such as argonaute 4 (AGO4) and cyclophilin 19 (CYP19). This Arabidopsis thaliana (Mouse-ear cress) protein is Basic leucine zipper 24.